Reading from the N-terminus, the 214-residue chain is Coiled-coil domain-containing protein 169 (214 aa).

Residues 56 to 138 (SEWKTRYETQ…YAFRLEQESK (83 aa)) adopt a coiled-coil conformation. Residues 154 to 214 (MTQVSGSNQV…RSNHLPKLNP (61 aa)) are disordered. Composition is skewed to polar residues over residues 155–166 (TQVSGSNQVSKR) and 185–195 (HNSMNQKTTNA).

It belongs to the CCDC169 family.

The chain is Coiled-coil domain-containing protein 169 (Ccdc169) from Mus musculus (Mouse).